Consider the following 343-residue polypeptide: Selenide, water dikinase (343 aa).

The active site involves Sec-16. Position 16 (Sec-16) is a non-standard amino acid, selenocysteine. ATP is bound by residues Lys-19 and 46 to 48 (GAE). Asp-49 is a binding site for Mg(2+). Residues Asp-66, Asp-89, and 137–139 (GHT) each bind ATP. Asp-89 lines the Mg(2+) pocket. Asp-225 is a binding site for Mg(2+).

It belongs to the selenophosphate synthase 1 family. Class I subfamily. As to quaternary structure, homodimer. Mg(2+) serves as cofactor.

It catalyses the reaction hydrogenselenide + ATP + H2O = selenophosphate + AMP + phosphate + 2 H(+). In terms of biological role, synthesizes selenophosphate from selenide and ATP. This chain is Selenide, water dikinase, found in Citrifermentans bemidjiense (strain ATCC BAA-1014 / DSM 16622 / JCM 12645 / Bem) (Geobacter bemidjiensis).